The primary structure comprises 477 residues: Bifunctional protein HldE (477 aa).

A ribokinase region spans residues 1–318 (MKVNLPAFER…ENAVRGRADT (318 aa)). 195-198 (NLSE) serves as a coordination point for ATP. Asp264 is a catalytic residue. The interval 344-477 (MTNGVFDILH…IKKIQTESEK (134 aa)) is cytidylyltransferase.

This sequence in the N-terminal section; belongs to the carbohydrate kinase PfkB family. The protein in the C-terminal section; belongs to the cytidylyltransferase family. Homodimer.

It carries out the reaction D-glycero-beta-D-manno-heptose 7-phosphate + ATP = D-glycero-beta-D-manno-heptose 1,7-bisphosphate + ADP + H(+). The catalysed reaction is D-glycero-beta-D-manno-heptose 1-phosphate + ATP + H(+) = ADP-D-glycero-beta-D-manno-heptose + diphosphate. The protein operates within nucleotide-sugar biosynthesis; ADP-L-glycero-beta-D-manno-heptose biosynthesis; ADP-L-glycero-beta-D-manno-heptose from D-glycero-beta-D-manno-heptose 7-phosphate: step 1/4. It functions in the pathway nucleotide-sugar biosynthesis; ADP-L-glycero-beta-D-manno-heptose biosynthesis; ADP-L-glycero-beta-D-manno-heptose from D-glycero-beta-D-manno-heptose 7-phosphate: step 3/4. In terms of biological role, catalyzes the phosphorylation of D-glycero-D-manno-heptose 7-phosphate at the C-1 position to selectively form D-glycero-beta-D-manno-heptose-1,7-bisphosphate. Functionally, catalyzes the ADP transfer from ATP to D-glycero-beta-D-manno-heptose 1-phosphate, yielding ADP-D-glycero-beta-D-manno-heptose. This chain is Bifunctional protein HldE, found in Salmonella enteritidis PT4 (strain P125109).